The sequence spans 222 residues: L-cystine transport system permease protein TcyL (222 aa).

Residues methionine 1 to threonine 22 lie on the Periplasmic side of the membrane. Residues alanine 19 to glutamine 207 form the ABC transmembrane type-1 domain. Residues leucine 23–methionine 43 form a helical membrane-spanning segment. The Cytoplasmic segment spans residues arginine 44 to glycine 64. Residues threonine 65 to leucine 85 traverse the membrane as a helical segment. The Periplasmic portion of the chain corresponds to aspartate 86–threonine 182. A helical transmembrane segment spans residues leucine 183–leucine 203. Residues serine 204–lysine 222 lie on the Cytoplasmic side of the membrane.

This sequence belongs to the binding-protein-dependent transport system permease family. HisMQ subfamily. As to quaternary structure, the complex is composed of two ATP-binding proteins (TcyN), two transmembrane proteins (TcyL) and a solute-binding protein (TcyJ).

The protein localises to the cell inner membrane. Its function is as follows. Part of the ABC transporter complex TcyJLN involved in L-cystine import. Responsible for the translocation of the substrate across the membrane. The polypeptide is L-cystine transport system permease protein TcyL (Escherichia coli O6:H1 (strain CFT073 / ATCC 700928 / UPEC)).